The sequence spans 732 residues: 1,4-alpha-glucan branching enzyme GlgB (732 aa).

Aspartate 409 acts as the Nucleophile in catalysis. Glutamate 462 functions as the Proton donor in the catalytic mechanism.

It belongs to the glycosyl hydrolase 13 family. GlgB subfamily. In terms of assembly, monomer.

The enzyme catalyses Transfers a segment of a (1-&gt;4)-alpha-D-glucan chain to a primary hydroxy group in a similar glucan chain.. It participates in glycan biosynthesis; glycogen biosynthesis. Catalyzes the formation of the alpha-1,6-glucosidic linkages in glycogen by scission of a 1,4-alpha-linked oligosaccharide from growing alpha-1,4-glucan chains and the subsequent attachment of the oligosaccharide to the alpha-1,6 position. The protein is 1,4-alpha-glucan branching enzyme GlgB of Corynebacterium diphtheriae (strain ATCC 700971 / NCTC 13129 / Biotype gravis).